Consider the following 200-residue polypeptide: Putative glucose-6-phosphate isomerase 2 (200 aa).

Fe cation contacts are provided by histidine 92, histidine 94, glutamate 101, and histidine 140.

This sequence belongs to the archaeal-type GPI family. In terms of assembly, homodimer. Fe cation is required as a cofactor.

The protein localises to the cytoplasm. It catalyses the reaction alpha-D-glucose 6-phosphate = beta-D-fructose 6-phosphate. It functions in the pathway carbohydrate degradation; glycolysis; D-glyceraldehyde 3-phosphate and glycerone phosphate from D-glucose: step 2/4. The polypeptide is Putative glucose-6-phosphate isomerase 2 (pgiA2) (Rhizobium meliloti (strain 1021) (Ensifer meliloti)).